We begin with the raw amino-acid sequence, 578 residues long: Adenine deaminase (578 aa).

It belongs to the metallo-dependent hydrolases superfamily. Adenine deaminase family. Mn(2+) serves as cofactor.

It carries out the reaction adenine + H2O + H(+) = hypoxanthine + NH4(+). The sequence is that of Adenine deaminase from Ligilactobacillus salivarius (strain UCC118) (Lactobacillus salivarius).